The following is a 103-amino-acid chain: Small ribosomal subunit protein uS10 (103 aa).

This sequence belongs to the universal ribosomal protein uS10 family. As to quaternary structure, part of the 30S ribosomal subunit.

Functionally, involved in the binding of tRNA to the ribosomes. The polypeptide is Small ribosomal subunit protein uS10 (Fusobacterium nucleatum subsp. nucleatum (strain ATCC 25586 / DSM 15643 / BCRC 10681 / CIP 101130 / JCM 8532 / KCTC 2640 / LMG 13131 / VPI 4355)).